The chain runs to 124 residues: Small ribosomal subunit protein uS12 (124 aa).

Residues 1 to 30 (MPTIQQLVRKGRRDKVAKVKTAALKGSPQR) are disordered. At aspartate 89 the chain carries 3-methylthioaspartic acid. Positions 105–124 (QGVKNRKQARSRYGAKKEKS) are disordered. The segment covering 108–118 (KNRKQARSRYG) has biased composition (basic residues).

It belongs to the universal ribosomal protein uS12 family. In terms of assembly, part of the 30S ribosomal subunit. Contacts proteins S8 and S17. May interact with IF1 in the 30S initiation complex.

Functionally, with S4 and S5 plays an important role in translational accuracy. In terms of biological role, interacts with and stabilizes bases of the 16S rRNA that are involved in tRNA selection in the A site and with the mRNA backbone. Located at the interface of the 30S and 50S subunits, it traverses the body of the 30S subunit contacting proteins on the other side and probably holding the rRNA structure together. The combined cluster of proteins S8, S12 and S17 appears to hold together the shoulder and platform of the 30S subunit. In Mycobacterium intracellulare, this protein is Small ribosomal subunit protein uS12.